The following is an 840-amino-acid chain: Translation initiation factor IF-2 (840 aa).

The tract at residues 1–251 (MTEEKKFSSS…GPAVPATERK (251 aa)) is disordered. Composition is skewed to polar residues over residues 38–50 (DGTN…TPRS) and 65–83 (NRHT…ASRP). A compositionally biased stretch (low complexity) spans 84-102 (NQSKSQGQGGRNNQRPGSR). 2 stretches are compositionally biased toward basic and acidic residues: residues 110–135 (PMIR…KTDN) and 158–168 (KPAEQSKKAAE). The segment covering 169 to 207 (KPAQTKPKTAETKTTATTTQSGTGKFGGALASGNNSARN) has biased composition (low complexity). Residues 230-239 (GSKKSRRIAA) show a composition bias toward basic residues. Residues 341–510 (ARPPVVTIMG…LLQAEVLELK (170 aa)) form the tr-type G domain. Residues 350–357 (GHVDHGKT) are G1. Position 350-357 (350-357 (GHVDHGKT)) interacts with GTP. Residues 375 to 379 (GITQH) are G2. The segment at 396 to 399 (DTPG) is G3. Residues 396–400 (DTPGH) and 450–453 (NKID) contribute to the GTP site. Residues 450-453 (NKID) are G4. Residues 486-488 (SAK) form a G5 region.

This sequence belongs to the TRAFAC class translation factor GTPase superfamily. Classic translation factor GTPase family. IF-2 subfamily.

It is found in the cytoplasm. Its function is as follows. One of the essential components for the initiation of protein synthesis. Protects formylmethionyl-tRNA from spontaneous hydrolysis and promotes its binding to the 30S ribosomal subunits. Also involved in the hydrolysis of GTP during the formation of the 70S ribosomal complex. This chain is Translation initiation factor IF-2, found in Leuconostoc citreum (strain KM20).